A 261-amino-acid polypeptide reads, in one-letter code: WW domain-binding protein 2 (261 aa).

The region spanning 1 to 84 (MALNKNHSEG…YLMKDCEIKQ (84 aa)) is the GRAM domain. A Phosphotyrosine modification is found at Y192. Residues 196–200 (PPPPY) carry the PPxY motif 1 motif. Residues 196–209 (PPPPYPGPMEPPVS) are compositionally biased toward pro residues. A disordered region spans residues 196-261 (PPPPYPGPME…YYPPEDKKTQ (66 aa)). Over residues 210-230 (GPSAPATPAAEAKAAEAAASA) the composition is skewed to low complexity. Y231 is subject to Phosphotyrosine. Residues 245-254 (SQPPPPPYYP) are compositionally biased toward pro residues. Positions 248–252 (PPPPY) match the PPxY motif 2 motif.

In terms of assembly, binds to the WW domain of YAP1, WWP1 and WWP2. Interacts with NEDD4. Interacts with ESR1 and UBE3A. Phosphorylated in repsonse to EGF as well as estrogen and progesterone hormones. Tyr-192 and Tyr-231 are phosphorylated by YES and SRC inducing nuclear translocation. Expressed in the ear and the eye. Isoform 1 is expressed in brain, inner ear and organ of Corti. Isoform 2 is only detected in brain.

It localises to the cytoplasm. The protein localises to the nucleus. Acts as a transcriptional coactivator of estrogen and progesterone receptors (ESR1 and PGR) upon hormone activation. In presence of estrogen, binds to ESR1-responsive promoters. Synergizes with YAP1 to enhance PGR activity. Modulates expression of post-synaptic scaffolding proteins via regulation of ESR1, ESR2 and PGR. This Mus musculus (Mouse) protein is WW domain-binding protein 2 (Wbp2).